Here is a 324-residue protein sequence, read N- to C-terminus: Bacilliredoxin reductase Bdr (324 aa).

Cysteine 220 carries the S-bacillithiol cysteine disulfide modification.

In terms of assembly, interacts with BrxC. Requires FAD as cofactor. Post-translationally, C-terminal Cys can react with bacillithiol (BSH) to form mixed disulfides. S-bacillithiolation protects Cys residues against overoxidation by acting as a redox switch in response to oxidative stress.

In terms of biological role, S-bacillithiolation is the formation of mixed disulfide bonds between protein thiols and the general thiol reductant bacillithiol (BSH) under oxidative stress. BSH is an equivalent of glutathione (GSH) in Firmicutes. This protein is a NADPH-dependent bacilliredoxin reductase, which debacillithiolates (removes BSH) the S-bacillithiolated BrxB (BrxB-SSB), and to a lesser extent BrxC (BrxC-SSB). Involved in a redox cascade increasing the efficacy of BrxB function by reducing BrxB-SSB and thus reactivating it. Has NADPH-dependent oxidase activity under aerobic conditions producing hydrogen peroxide (H(2)O(2)). This is Bacilliredoxin reductase Bdr from Bacillus subtilis (strain 168).